The chain runs to 501 residues: Protein DETOXIFICATION 37 (501 aa).

Helical transmembrane passes span 44-64 (MMIE…VYVI), 84-104 (LAAA…LLLG), 134-154 (VVLI…NPIL), 163-183 (VATL…AYAV), 200-220 (SAYI…IAVY), 222-242 (LGYG…IIVV), 280-300 (AVML…AGLL), 310-330 (LAIC…FNAA), 352-372 (VVTT…VLSW), 396-416 (FLAI…VAVG), 422-442 (FVAY…GFVL), and 453-473 (IWTG…IVTL).

It belongs to the multi antimicrobial extrusion (MATE) (TC 2.A.66.1) family.

It is found in the membrane. This is Protein DETOXIFICATION 37 from Arabidopsis thaliana (Mouse-ear cress).